The primary structure comprises 364 residues: Growth hormone secretagogue receptor type 1 (364 aa).

The Extracellular portion of the chain corresponds to 1-40 (MWNATPSEEPEPNVTLDLDWDASPGNDSLSDELLPLFPAP). 2 N-linked (GlcNAc...) asparagine glycosylation sites follow: Asn13 and Asn26. A helical transmembrane segment spans residues 41–66 (LLAGVTATCVALFVVGISGNLLTMLV). The Cytoplasmic segment spans residues 67–72 (VSRFRE). A helical membrane pass occupies residues 73 to 96 (LRTTTNLYLSSMAFSDLLIFLCMP). At 97-117 (LDLVRLWQYRPWNFGDLLCKL) the chain is on the extracellular side. Cys115 and Cys197 are disulfide-bonded. The helical transmembrane segment at 118–139 (FQFVSESCTYATVLTITALSVE) threads the bilayer. At 140–162 (RYFAICFPLRAKVVVTKGRVKLV) the chain is on the cytoplasmic side. A helical membrane pass occupies residues 163 to 183 (ILVIWAVAFCSAGPIFVLVGV). The Extracellular portion of the chain corresponds to 184–211 (EHENGTDPRDTNECRATEFAVRSGLLTV). A glycan (N-linked (GlcNAc...) asparagine) is linked at Asn187. Residues 212–235 (MVWVSSVFFFLPVFCLTVLYSLIG) traverse the membrane as a helical segment. Topologically, residues 236-263 (RKLWRRRGDAAVGSSLRDQNHKQTVKML) are cytoplasmic. Residues 264 to 285 (AVVVFAFILCWLPFHVGRYLFS) form a helical membrane-spanning segment. At 286-302 (KSFEPGSLEIAQISQYC) the chain is on the extracellular side. The chain crosses the membrane as a helical span at residues 303–326 (NLVSFVLFYLSAAINPILYNIMSK). Residues 327 to 364 (KYRVAVFKLLGFESFSQRKLSTLKDESSRAWTKSSINT) lie on the Cytoplasmic side of the membrane.

Belongs to the G-protein coupled receptor 1 family.

The protein resides in the cell membrane. In terms of biological role, receptor for ghrelin, coupled to G-alpha-11 proteins. Stimulates growth hormone secretion. Also binds other growth hormone releasing peptides (GHRP) (e.g. Met-enkephalin and GHRP-6) as well as non-peptide, low molecular weight secretagogues (e.g. L-692,429, MK-0677, adenosine). This Mus musculus (Mouse) protein is Growth hormone secretagogue receptor type 1 (Ghsr).